A 357-amino-acid polypeptide reads, in one-letter code: Magnesium-chelatase subunit ChlI (357 aa).

47–54 (GDRGTGKS) lines the ATP pocket.

Belongs to the Mg-chelatase subunits D/I family.

The enzyme catalyses protoporphyrin IX + Mg(2+) + ATP + H2O = Mg-protoporphyrin IX + ADP + phosphate + 3 H(+). It functions in the pathway porphyrin-containing compound metabolism; chlorophyll biosynthesis. Its function is as follows. Involved in chlorophyll biosynthesis; introduces a magnesium ion into protoporphyrin IX to yield Mg-protoporphyrin IX. The polypeptide is Magnesium-chelatase subunit ChlI (chlI) (Synechocystis sp. (strain ATCC 27184 / PCC 6803 / Kazusa)).